A 340-amino-acid polypeptide reads, in one-letter code: Alpha-1,4-N-acetylglucosaminyltransferase (340 aa).

Over 1-4 (MRKE) the chain is Cytoplasmic. Residues 5-25 (LQLSLSVTLLLVCGFLYQFTL) traverse the membrane as a helical; Signal-anchor for type II membrane protein segment. The Lumenal segment spans residues 26–340 (KSSCLFCLPS…VTGELGPGNK (315 aa)). Asn-99 and Asn-138 each carry an N-linked (GlcNAc...) asparagine glycan. A DXD motif motif is present at residues 167–169 (DTD). N-linked (GlcNAc...) asparagine glycans are attached at residues Asn-251 and Asn-282.

The protein belongs to the glycosyltransferase 32 family. Detected in stomach and pancreas.

Its subcellular location is the golgi apparatus membrane. It functions in the pathway protein modification; protein glycosylation. Catalyzes the transfer of N-acetylglucosamine (GlcNAc) to core 2 branched O-glycans. Necessary for the synthesis of type III mucin which is specifically produced in the stomach, duodenum, and pancreatic duct. May protect against inflammation-associated gastric adenocarcinomas. The polypeptide is Alpha-1,4-N-acetylglucosaminyltransferase (A4GNT) (Homo sapiens (Human)).